The chain runs to 168 residues: Luminal-binding protein 3 (168 aa).

Residue asparagine 120 is glycosylated (N-linked (GlcNAc...) asparagine). Residues 148-168 (QRSGGASGGSSSSEEDGHDEL) form a disordered region. The short motif at 165–168 (HDEL) is the Prevents secretion from ER element.

Belongs to the heat shock protein 70 family.

The protein localises to the endoplasmic reticulum lumen. Functionally, probably plays a role in facilitating the assembly of multimeric protein complexes inside the ER. The chain is Luminal-binding protein 3 (BIP3) from Nicotiana tabacum (Common tobacco).